The chain runs to 201 residues: Large ribosomal subunit protein bL25 (201 aa).

It belongs to the bacterial ribosomal protein bL25 family. CTC subfamily. As to quaternary structure, part of the 50S ribosomal subunit; part of the 5S rRNA/L5/L18/L25 subcomplex. Contacts the 5S rRNA. Binds to the 5S rRNA independently of L5 and L18.

Its function is as follows. This is one of the proteins that binds to the 5S RNA in the ribosome where it forms part of the central protuberance. This Burkholderia vietnamiensis (strain G4 / LMG 22486) (Burkholderia cepacia (strain R1808)) protein is Large ribosomal subunit protein bL25.